The sequence spans 235 residues: Thrombin-like enzyme bilineobin (235 aa).

The 227-residue stretch at 1–227 (IIGGDECNIN…HLDWIQSIIA (227 aa)) folds into the Peptidase S1 domain. 6 cysteine pairs are disulfide-bonded: C7-C141, C28-C44, C78-C234, C120-C188, C152-C167, and C178-C203. Residue H43 is the Charge relay system of the active site. N45, N57, and N81 each carry an N-linked (GlcNAc...) asparagine glycan. The active-site Charge relay system is D88. N132 and N148 each carry an N-linked (GlcNAc...) asparagine glycan. S182 serves as the catalytic Charge relay system. N229 carries an N-linked (GlcNAc...) asparagine glycan.

It belongs to the peptidase S1 family. Snake venom subfamily. In terms of assembly, monomer. Post-translationally, glycosylated. Expressed by the venom gland.

Its subcellular location is the secreted. Not inhibited by hirudin. Thrombin-like snake venom serine protease that has coagulant activity by releasing fibrinopeptides A and B from fibrinogen alpha (FGA) and beta (FGB), with a preference for beta chain. The sequence is that of Thrombin-like enzyme bilineobin from Agkistrodon bilineatus (Cantil).